A 210-amino-acid polypeptide reads, in one-letter code: Inner membrane-spanning protein YciB (210 aa).

The next 6 membrane-spanning stretches (helical) occupy residues 12-32, 53-73, 78-98, 115-135, 153-173, and 175-195; these read EVSPLLKLVLELGPLMVFFFA, IFIATGLFMAATAAALAVSWM, LPMMPLISGIVVFVFGALTLW, LFGAILLGGLLFGKSLLGYVF, WGVFFLFLAVLNEVIWRSFST, and FWVAFKVWGTMPITILFTLAQ.

The protein belongs to the YciB family.

Its subcellular location is the cell inner membrane. Functionally, plays a role in cell envelope biogenesis, maintenance of cell envelope integrity and membrane homeostasis. The polypeptide is Inner membrane-spanning protein YciB (Sinorhizobium medicae (strain WSM419) (Ensifer medicae)).